Here is a 430-residue protein sequence, read N- to C-terminus: Histidine--tRNA ligase (430 aa).

Belongs to the class-II aminoacyl-tRNA synthetase family. As to quaternary structure, homodimer.

The protein localises to the cytoplasm. The catalysed reaction is tRNA(His) + L-histidine + ATP = L-histidyl-tRNA(His) + AMP + diphosphate + H(+). The protein is Histidine--tRNA ligase of Anaplasma marginale (strain Florida).